We begin with the raw amino-acid sequence, 430 residues long: RNA-binding protein 34 (430 aa).

Disordered stretches follow at residues 1–55 (MALE…GTGR), 72–123 (VPVP…ADRE), and 134–153 (EIHQ…VKVA). Phosphoserine occurs at positions 14, 28, and 99. Basic and acidic residues predominate over residues 23 to 34 (DGVRGSPPEDYR). The segment covering 113–123 (TNAEKKLADRE) has biased composition (basic and acidic residues). K151 bears the N6-acetyllysine mark. RRM domains lie at 185–280 (RTVF…LASE) and 287–364 (RSVF…RSVN). K242 participates in a covalent cross-link: Glycyl lysine isopeptide (Lys-Gly) (interchain with G-Cter in SUMO2). S288 bears the Phosphoserine mark. Disordered regions lie at residues 365 to 395 (KEKF…KTAE) and 411 to 430 (KTKK…RKQK).

It belongs to the RRM RBM34 family.

It is found in the nucleus. The protein localises to the nucleolus. This is RNA-binding protein 34 (RBM34) from Homo sapiens (Human).